A 337-amino-acid chain; its full sequence is MREPRFWYGPVSLGSVLLAPIAACYGAVAAARLAREGTRAGCPVICIGNYHVGGAGKTPTTLRLVEILREIGETPVVVSRGYGGTLAGPVRVNETHRAADVGDEPKMMARHVPVIVARDRVEGAELARREGASVVLLDDGFQNPALAKDAAVIVIDAARGLGNRMIFPAGPLRAPLAPQVARTNALIVIGEGHAADDIAQGVVQRGGLVVRAAFVPEESSLARLRGARVLAFAGIGDPGRFFATLAKHGVELASRKEFADHHPFTEAELKALADEAQAGGLTLVTTEKDLARIEGDPALAAYAAQIVPFAVTLRVEDEGALLDFLKARMRRARQARQ.

51-58 (HVGGAGKT) is a binding site for ATP.

The protein belongs to the LpxK family.

The catalysed reaction is a lipid A disaccharide + ATP = a lipid IVA + ADP + H(+). It participates in glycolipid biosynthesis; lipid IV(A) biosynthesis; lipid IV(A) from (3R)-3-hydroxytetradecanoyl-[acyl-carrier-protein] and UDP-N-acetyl-alpha-D-glucosamine: step 6/6. In terms of biological role, transfers the gamma-phosphate of ATP to the 4'-position of a tetraacyldisaccharide 1-phosphate intermediate (termed DS-1-P) to form tetraacyldisaccharide 1,4'-bis-phosphate (lipid IVA). In Afipia carboxidovorans (strain ATCC 49405 / DSM 1227 / KCTC 32145 / OM5) (Oligotropha carboxidovorans), this protein is Tetraacyldisaccharide 4'-kinase.